A 186-amino-acid chain; its full sequence is Casparian strip membrane protein 3 (186 aa).

Topologically, residues 1 to 26 (MKAGALELGEGSKTSIPRGGVNRGIS) are cytoplasmic. The helical transmembrane segment at 27-47 (ILDFILRLITIIGTLGSAIAM) threads the bilayer. The Extracellular segment spans residues 48–74 (GTTNETLPFFTQFTQFRAEYDDLPTFT). N-linked (GlcNAc...) asparagine glycosylation is present at Asn-51. A helical transmembrane segment spans residues 75 to 95 (FFVIANSIVSGYLVLSLPMSI). The Cytoplasmic portion of the chain corresponds to 96 to 107 (LHIVRSGARASR). The helical transmembrane segment at 108–128 (IVLIFFDTAMLALLTAAASAA) threads the bilayer. The Extracellular segment spans residues 129-161 (SAIVYLAHKGNAQANWFAICQQFKSFCERISGS). Residues 162–182 (LIGSFGGIILFILLVLLSAVA) form a helical membrane-spanning segment. At 183-186 (LSRC) the chain is on the cytoplasmic side.

This sequence belongs to the Casparian strip membrane proteins (CASP) family. As to quaternary structure, homodimer and heterodimers.

Its subcellular location is the cell membrane. Functionally, regulates membrane-cell wall junctions and localized cell wall deposition. Required for establishment of the Casparian strip membrane domain (CSD) and the subsequent formation of Casparian strips, a cell wall modification of the root endodermis that determines an apoplastic barrier between the intraorganismal apoplasm and the extraorganismal apoplasm and prevents lateral diffusion. This chain is Casparian strip membrane protein 3, found in Vitis vinifera (Grape).